A 532-amino-acid chain; its full sequence is Muscarinic acetylcholine receptor M5 (532 aa).

The Extracellular segment spans residues Met1–Glu29. Asn8 carries N-linked (GlcNAc...) asparagine glycosylation. A helical transmembrane segment spans residues Val30–Ile53. The Cytoplasmic portion of the chain corresponds to Ser54–Asn66. Residues Tyr67–Tyr87 traverse the membrane as a helical segment. Over Thr88–Asp104 the chain is Extracellular. Cys103 and Cys183 are oxidised to a cystine. Residues Leu105–Phe126 traverse the membrane as a helical segment. At Asp127–Arg146 the chain is on the cytoplasmic side. The chain crosses the membrane as a helical span at residues Ala147–Trp169. At Gln170 to Pro191 the chain is on the extracellular side. A helical membrane pass occupies residues Thr192–Cys214. The Cytoplasmic segment spans residues Arg215–Thr443. The interval Ala262–Trp294 is disordered. A compositionally biased stretch (low complexity) spans Ser270 to Thr281. Polar residues predominate over residues Gly282–Ser291. A helical membrane pass occupies residues Leu444–Val464. Over Ser465–His478 the chain is Extracellular. Residues Leu479 to Cys498 traverse the membrane as a helical segment. The Cytoplasmic segment spans residues Asn499–Pro532. Phosphothreonine is present on residues Thr501 and Thr505.

This sequence belongs to the G-protein coupled receptor 1 family. Muscarinic acetylcholine receptor subfamily. CHRM5 sub-subfamily.

Its subcellular location is the cell membrane. The protein resides in the postsynaptic cell membrane. In terms of biological role, the muscarinic acetylcholine receptor mediates various cellular responses, including inhibition of adenylate cyclase, breakdown of phosphoinositides and modulation of potassium channels through the action of G proteins. Primary transducing effect is Pi turnover. This chain is Muscarinic acetylcholine receptor M5 (CHRM5), found in Homo sapiens (Human).